Here is a 172-residue protein sequence, read N- to C-terminus: Small ribosomal subunit protein uS5 (172 aa).

An S5 DRBM domain is found at 17–80 (LREKMISVNR…DEARRKMVKV (64 aa)).

Belongs to the universal ribosomal protein uS5 family. As to quaternary structure, part of the 30S ribosomal subunit. Contacts proteins S4 and S8.

With S4 and S12 plays an important role in translational accuracy. Functionally, located at the back of the 30S subunit body where it stabilizes the conformation of the head with respect to the body. The polypeptide is Small ribosomal subunit protein uS5 (Cupriavidus metallidurans (strain ATCC 43123 / DSM 2839 / NBRC 102507 / CH34) (Ralstonia metallidurans)).